Here is a 303-residue protein sequence, read N- to C-terminus: Formylglycine-generating enzyme (303 aa).

The Ca(2+) site is built by Asn188, Ile189, Asp202, Tyr204, Asn222, Val223, Gly225, and Val227. Cu(+) contacts are provided by Cys269 and Cys274.

Belongs to the sulfatase-modifying factor family. It depends on Cu(+) as a cofactor.

It carries out the reaction L-cysteinyl-[sulfatase] + 2 a thiol + O2 = an organic disulfide + 3-oxo-L-alanyl-[sulfatase] + hydrogen sulfide + H2O + H(+). The protein operates within protein modification; sulfatase oxidation. Its function is as follows. Oxidase that catalyzes the conversion of cysteine to 3-oxoalanine on target proteins. 3-oxoalanine modification, which is also named formylglycine (fGly), occurs in the maturation of arylsulfatases and some alkaline phosphatases that use the hydrated form of 3-oxoalanine as a catalytic nucleophile. This Thermomonospora curvata (strain ATCC 19995 / DSM 43183 / JCM 3096 / KCTC 9072 / NBRC 15933 / NCIMB 10081 / Henssen B9) protein is Formylglycine-generating enzyme.